Here is a 4639-residue protein sequence, read N- to C-terminus: Dynein heavy chain, cytoplasmic (4639 aa).

The interval 1-1856 (MGDSLENPDT…TIHMANARFF (1856 aa)) is stem. 3 coiled-coil regions span residues 530 to 565 (LDITKEGSEAWEAAVKRYEEKIDRVETRITAHLRDQ), 774 to 794 (SLIESVRTYERTLEKIEDRAS), and 1264 to 1368 (DDAL…ARLR). 4 AAA regions span residues 1857 to 2084 (YGFE…VLIS), 2166 to 2437 (EEIR…FTRL), 2541 to 2790 (EVET…WVRG), and 2884 to 3153 (VFYE…GGRT). ATP contacts are provided by residues 1895–1902 (GPAGTGKT), 2210–2217 (GPSGSGKS), 2580–2587 (GPPGSGKT), and 2922–2929 (GVSGAGKT). 3 coiled-coil regions span residues 3189–3261 (GLNK…EKRK), 3382–3478 (AIAQ…WEST), and 3723–3782 (EFRL…EIET). The stalk stretch occupies residues 3189–3478 (GLNKIAETVE…NIERERWEST (290 aa)). AAA stretches follow at residues 3539–3768 (LSNP…DINQ) and 3989–4205 (AHNV…TLDT).

It belongs to the dynein heavy chain family. As to quaternary structure, consists of at least two heavy chains and a number of intermediate and light chains.

It localises to the cytoplasm. It is found in the cytoskeleton. In terms of biological role, cytoplasmic dynein acts as a motor for the intracellular retrograde motility of vesicles and organelles along microtubules. Dynein has ATPase activity; the force-producing power stroke is thought to occur on release of ADP. The chain is Dynein heavy chain, cytoplasmic (Dhc64C) from Drosophila melanogaster (Fruit fly).